Here is a 173-residue protein sequence, read N- to C-terminus: Peptide deformylase (173 aa).

The Fe cation site is built by C91 and H133. E134 is an active-site residue. Residue H137 coordinates Fe cation.

This sequence belongs to the polypeptide deformylase family. Fe(2+) serves as cofactor.

It carries out the reaction N-terminal N-formyl-L-methionyl-[peptide] + H2O = N-terminal L-methionyl-[peptide] + formate. Removes the formyl group from the N-terminal Met of newly synthesized proteins. Requires at least a dipeptide for an efficient rate of reaction. N-terminal L-methionine is a prerequisite for activity but the enzyme has broad specificity at other positions. The polypeptide is Peptide deformylase (Buchnera aphidicola subsp. Acyrthosiphon pisum (strain 5A)).